The chain runs to 79 residues: ATP synthase subunit c (79 aa).

2 helical membrane-spanning segments follow: residues 10-30 (IAGA…IGVL) and 52-72 (FFIV…LAMY).

It belongs to the ATPase C chain family. F-type ATPases have 2 components, F(1) - the catalytic core - and F(0) - the membrane proton channel. F(1) has five subunits: alpha(3), beta(3), gamma(1), delta(1), epsilon(1). F(0) has three main subunits: a(1), b(2) and c(10-14). The alpha and beta chains form an alternating ring which encloses part of the gamma chain. F(1) is attached to F(0) by a central stalk formed by the gamma and epsilon chains, while a peripheral stalk is formed by the delta and b chains.

The protein resides in the cell inner membrane. Functionally, f(1)F(0) ATP synthase produces ATP from ADP in the presence of a proton or sodium gradient. F-type ATPases consist of two structural domains, F(1) containing the extramembraneous catalytic core and F(0) containing the membrane proton channel, linked together by a central stalk and a peripheral stalk. During catalysis, ATP synthesis in the catalytic domain of F(1) is coupled via a rotary mechanism of the central stalk subunits to proton translocation. Key component of the F(0) channel; it plays a direct role in translocation across the membrane. A homomeric c-ring of between 10-14 subunits forms the central stalk rotor element with the F(1) delta and epsilon subunits. The protein is ATP synthase subunit c of Thiobacillus denitrificans (strain ATCC 25259 / T1).